The primary structure comprises 248 residues: DnaA regulatory inactivator Hda (248 aa).

Belongs to the DnaA family. HdA subfamily. As to quaternary structure, the active form seems to be an ADP-bound monomer. Forms the RIDA complex (regulatory inactivation of DnaA) of ATP-DnaA, ADP-Hda and the DNA-loaded beta sliding clamp (dnaN).

Its function is as follows. Mediates the interaction of DNA replication initiator protein DnaA with DNA polymerase subunit beta sliding clamp (dnaN). Stimulates hydrolysis of ATP-DnaA to ADP-DnaA, rendering DnaA inactive for reinitiation, a process called regulatory inhibition of DnaA or RIDA. This chain is DnaA regulatory inactivator Hda, found in Proteus mirabilis (strain HI4320).